The sequence spans 66 residues: Small ribosomal subunit protein bS21 (66 aa).

The protein belongs to the bacterial ribosomal protein bS21 family.

The chain is Small ribosomal subunit protein bS21 from Persephonella marina (strain DSM 14350 / EX-H1).